The sequence spans 340 residues: Phosphoribosylformylglycinamidine cyclo-ligase (340 aa).

Belongs to the AIR synthase family.

The protein resides in the cytoplasm. The enzyme catalyses 2-formamido-N(1)-(5-O-phospho-beta-D-ribosyl)acetamidine + ATP = 5-amino-1-(5-phospho-beta-D-ribosyl)imidazole + ADP + phosphate + H(+). It functions in the pathway purine metabolism; IMP biosynthesis via de novo pathway; 5-amino-1-(5-phospho-D-ribosyl)imidazole from N(2)-formyl-N(1)-(5-phospho-D-ribosyl)glycinamide: step 2/2. The sequence is that of Phosphoribosylformylglycinamidine cyclo-ligase from Lactococcus lactis subsp. cremoris (strain MG1363).